Reading from the N-terminus, the 396-residue chain is S-adenosylmethionine synthase (396 aa).

Residue His-16 coordinates ATP. Asp-18 is a Mg(2+) binding site. Residue Glu-44 coordinates K(+). 2 residues coordinate L-methionine: Glu-57 and Gln-100. The segment at 100–110 is flexible loop; it reads QSVDIAQGVDR. Residues 165–167, Asp-240, 246–247, Ala-263, and Lys-267 each bind ATP; these read DAK and RK. Asp-240 contacts L-methionine. Lys-271 lines the L-methionine pocket.

The protein belongs to the AdoMet synthase family. As to quaternary structure, homotetramer; dimer of dimers. Mg(2+) is required as a cofactor. It depends on K(+) as a cofactor.

The protein localises to the cytoplasm. It catalyses the reaction L-methionine + ATP + H2O = S-adenosyl-L-methionine + phosphate + diphosphate. The protein operates within amino-acid biosynthesis; S-adenosyl-L-methionine biosynthesis; S-adenosyl-L-methionine from L-methionine: step 1/1. Its function is as follows. Catalyzes the formation of S-adenosylmethionine (AdoMet) from methionine and ATP. The overall synthetic reaction is composed of two sequential steps, AdoMet formation and the subsequent tripolyphosphate hydrolysis which occurs prior to release of AdoMet from the enzyme. The chain is S-adenosylmethionine synthase from Pseudomonas savastanoi pv. phaseolicola (strain 1448A / Race 6) (Pseudomonas syringae pv. phaseolicola (strain 1448A / Race 6)).